Consider the following 473-residue polypeptide: MICLVILTCIIMSNSFVNNNNMVQAKMTWTMKAAEEAEAVANINCSEHGRAFLDGIISEGSPKCECNTCYTGPDCSEKIQGCSADVASGDGLFLEEYWKQHKEASAVLVSPWHRMSYFFNPVSNFISFELEKTIKELHEVVGNAAAKDRYIVFGVGVTQLIHGLVISLSPNMTATPDAPESKVVAHAPFYPVFREQTKYFDKKGYVWAGNAANYVNVSNPEQYIEMVTSPNNPEGLLRHAVIKGCKSIYDMVYYWPHYTPIKYKADEDILLFTMSKFTGHSGSRFGWALIKDESVYNNLLNYMTKNTEGTPRETQLRSLKVLKEIVAMVKTQKGTMRDLNTFGFKKLRERWVNITALLDQSDRFSYQELPQSEYCNYFRRMRPPSPSYAWVNCEWEEDKDCYQTFQNGRINTQSGVGFEASSRYVRLSLIKTQDDFDQLMYYLKDMVKAKRKTPLIKQLFTDETETASRRPFI.

The N-terminal stretch at 1-15 is a signal peptide; the sequence is MICLVILTCIIMSNS. Residues 16 to 25 constitute a propeptide that is removed on maturation; sequence FVNNNNMVQA. The EGF-like; atypical domain occupies 38–84; it reads EAVANINCSEHGRAFLDGIISEGSPKCECNTCYTGPDCSEKIQGCSA. Residue N44 is glycosylated (N-linked (GlcNAc...) asparagine). 3 disulfides stabilise this stretch: C45/C64, C66/C75, and C69/C82. 117-125 provides a ligand contact to chloride; that stretch reads YFFNPVSNF. Residues N171 and N216 are each glycosylated (N-linked (GlcNAc...) asparagine). K276 is subject to N6-(pyridoxal phosphate)lysine. N353 carries an N-linked (GlcNAc...) asparagine glycan. C393 and C401 are joined by a disulfide.

The protein belongs to the alliinase family. In terms of assembly, homodimer. Requires pyridoxal 5'-phosphate as cofactor. Glycosylated. As to expression, high expression in bulbs, lower expression in leaves, and no expression in roots.

The protein localises to the vacuole. The enzyme catalyses an S-alkyl-L-cysteine S-oxide = an S-alkyl sulfenate + 2-aminoprop-2-enoate. It catalyses the reaction alliin = allylsulfenate + 2-aminoprop-2-enoate. In terms of biological role, able to cleave the C-S bond of sulfoxide derivatives of Cys to produce allicin, thus giving rise to all sulfur compounds which are responsible for most of the properties of garlic, such as the specific smell and flavor as well as the health benefits like blood lipid or blood pressure lowering. The polypeptide is Alliin lyase 2 (Allium sativum (Garlic)).